The sequence spans 520 residues: Ribonuclease Y (520 aa).

Residues 3–23 (IEIAIVLILAAAGLGYFVGNM) form a helical membrane-spanning segment. Positions 210-273 (SVSVVALPSD…EVAKIALEKL (64 aa)) constitute a KH domain. The region spanning 336 to 429 (VYQHSLEVAF…VQAADALSGA (94 aa)) is the HD domain.

Belongs to the RNase Y family.

Its subcellular location is the cell membrane. Functionally, endoribonuclease that initiates mRNA decay. The polypeptide is Ribonuclease Y (Geobacter metallireducens (strain ATCC 53774 / DSM 7210 / GS-15)).